Consider the following 222-residue polypeptide: MANVDVLDLGGKKVGSLELADELFAPSEVNEALLWEAVKHYRASLRQGTHATKNKKLVSGSGKKLWKQKGTGRARVGSVRSPLWRHGGTVHGPQPRSYDYAFPKKKLMGALRSALAAKLADGKLIVVESFEVSEPKTKLYRTALDKLEANRSTLLVESSQSLTENLYLGARNLANVELVLNNEVHPYDLLRYERAIFSRAAIEKLQESLQKTVSRRRKAEVA.

Belongs to the universal ribosomal protein uL4 family. As to quaternary structure, part of the 50S ribosomal subunit.

Functionally, one of the primary rRNA binding proteins, this protein initially binds near the 5'-end of the 23S rRNA. It is important during the early stages of 50S assembly. It makes multiple contacts with different domains of the 23S rRNA in the assembled 50S subunit and ribosome. Its function is as follows. Forms part of the polypeptide exit tunnel. The polypeptide is Large ribosomal subunit protein uL4 (Acidobacterium capsulatum (strain ATCC 51196 / DSM 11244 / BCRC 80197 / JCM 7670 / NBRC 15755 / NCIMB 13165 / 161)).